The following is a 535-amino-acid chain: T-box transcription factor TBX21 (535 aa).

The segment at 1 to 62 is disordered; it reads MGIVEPGCGD…SLGSPYPGGA (62 aa). Serine 53 is modified (phosphoserine). Tyrosine 77 carries the phosphotyrosine modification. The tract at residues 83–109 is disordered; that stretch reads AAGFPGAGESFPPPADAEGYQPGEGYA. Tyrosine 118 carries the post-translational modification Phosphotyrosine. A DNA-binding region (T-box) is located at residues 141–326; sequence LNNHLLWSKF…NNPFAKGFRE (186 aa). Tyrosine 220 carries the post-translational modification Phosphotyrosine; by ABL1. Serine 225 is subject to Phosphoserine. Phosphotyrosine; by ABL1 is present on tyrosine 266. At threonine 303 the chain carries Phosphothreonine. A Phosphotyrosine; by ABL1 modification is found at tyrosine 305. Residue lysine 314 forms a Glycyl lysine isopeptide (Lys-Gly) (interchain with G-Cter in ubiquitin) linkage. A disordered region spans residues 449–535; it reads RPMRTLPMEP…EGQFYNYFPN (87 aa). The segment covering 503-520 has biased composition (low complexity); it reads SPYPSSGDSSSPAGAPSP. Serine 513 is modified (phosphoserine). Tyrosine 530 bears the Phosphotyrosine; by ITK mark.

In terms of assembly, interacts with RUNX1, RUNX3, ITK, ABL1, RELA, CDK9 and KDM6B. The phosphorylated form (at Thr-303) interacts with NFATC2. Interacts with SMARCA4 in a KDM6B-dependent manner. Interacts with CCTN1. Interacts with USP10. The phosphorylated form (at Tyr-530) interacts with GATA3. Post-translationally, phosphorylations at Ser-53, Tyr-77, Ser-225 and Ser-513 are regulated by mTORC1. Phosphorylation at Tyr-530 is essential for its interaction GATA3. Phosphorylation at Tyr-220, Tyr-266 and Tyr-305 enhances its transcriptional activator activity. Phosphorylation at Thr-303 is required for its interaction with NFATC2. In terms of processing, ubiquitinated at Lys-314, leading to its degradation by the proteasome. Ubiquitination is essential for controlling protein stability, binding to the T-box-binding element of the IFN-gamma promoter, and for interaction with NFATC2 through induction of phosphorylation at Thr-303. Deubiquitinated by USP10 leading to its stabilization. T-cell specific.

It is found in the nucleus. In terms of biological role, lineage-defining transcription factor which initiates Th1 lineage development from naive Th precursor cells both by activating Th1 genetic programs and by repressing the opposing Th2 and Th17 genetic programs. Activates transcription of a set of genes important for Th1 cell function, including those encoding IFN-gamma and the chemokine receptor CXCR3. Induces permissive chromatin accessibilty and CpG methylation in IFNG. Activates IFNG and CXCR3 genes in part by recruiting chromatin remodeling complexes including KDM6B, a SMARCA4-containing SWI/SNF-complex, and an H3K4me2-methyltransferase complex to their promoters and all of these complexes serve to establish a more permissive chromatin state conducive with transcriptional activation. Can activate Th1 genes also via recruitment of Mediator complex and P-TEFb (composed of CDK9 and CCNT1/cyclin-T1) in the form of the super elongation complex (SEC) to super-enhancers and associated genes in activated Th1 cells. Inhibits the Th17 cell lineage commitment by blocking RUNX1-mediated transactivation of Th17 cell-specific transcriptinal regulator RORC. Inhibits the Th2 cell lineage commitment by suppressing the production of Th2 cytokines, such as IL-4, IL-5, and IL- 13, via repression of transcriptional regulators GATA3 and NFATC2. Protects Th1 cells from amplifying aberrant type-I IFN response in an IFN-gamma abundant microenvironment by acting as a repressor of type-I IFN transcription factors and type-I IFN-stimulated genes. Acts as a regulator of antiviral B-cell responses; controls chronic viral infection by promoting the antiviral antibody IgG2a isotype switching and via regulation of a broad antiviral gene expression program. Required for the correct development of natural killer (NK) and mucosal-associated invariant T (MAIT) cells. This is T-box transcription factor TBX21 (TBX21) from Homo sapiens (Human).